Consider the following 149-residue polypeptide: Large ribosomal subunit protein bL9 (149 aa).

The protein belongs to the bacterial ribosomal protein bL9 family.

Its function is as follows. Binds to the 23S rRNA. In Vibrio cholerae serotype O1 (strain ATCC 39541 / Classical Ogawa 395 / O395), this protein is Large ribosomal subunit protein bL9.